The chain runs to 552 residues: Dihydroxy-acid dehydratase (552 aa).

D78 is a binding site for Mg(2+). C119 provides a ligand contact to [2Fe-2S] cluster. Mg(2+) is bound by residues D120 and K121. Residue K121 is modified to N6-carboxylysine. C191 lines the [2Fe-2S] cluster pocket. E442 lines the Mg(2+) pocket. S468 serves as the catalytic Proton acceptor.

Belongs to the IlvD/Edd family. In terms of assembly, homodimer. [2Fe-2S] cluster serves as cofactor. Mg(2+) is required as a cofactor.

The enzyme catalyses (2R)-2,3-dihydroxy-3-methylbutanoate = 3-methyl-2-oxobutanoate + H2O. It carries out the reaction (2R,3R)-2,3-dihydroxy-3-methylpentanoate = (S)-3-methyl-2-oxopentanoate + H2O. It functions in the pathway amino-acid biosynthesis; L-isoleucine biosynthesis; L-isoleucine from 2-oxobutanoate: step 3/4. The protein operates within amino-acid biosynthesis; L-valine biosynthesis; L-valine from pyruvate: step 3/4. Functions in the biosynthesis of branched-chain amino acids. Catalyzes the dehydration of (2R,3R)-2,3-dihydroxy-3-methylpentanoate (2,3-dihydroxy-3-methylvalerate) into 2-oxo-3-methylpentanoate (2-oxo-3-methylvalerate) and of (2R)-2,3-dihydroxy-3-methylbutanoate (2,3-dihydroxyisovalerate) into 2-oxo-3-methylbutanoate (2-oxoisovalerate), the penultimate precursor to L-isoleucine and L-valine, respectively. In Clostridium botulinum (strain Eklund 17B / Type B), this protein is Dihydroxy-acid dehydratase.